The sequence spans 110 residues: Carboxysome shell protein CsoS1B (110 aa).

The 86-residue stretch at 8 to 93 (ALGMIETRGL…VHSEVEIILP (86 aa)) folds into the BMC domain.

It belongs to the bacterial microcompartments protein family. CsoS1 subfamily. In terms of assembly, homohexamer with a small central pore. Interacts with the N-terminus (residues 1-136) of RuBisCO (CbbL).

The protein localises to the carboxysome. One of shell proteins of the carboxysome, a polyhedral inclusion where RuBisCO (ribulose bisphosphate carboxylase, ccbL-ccbS) is sequestered. Assembles into hexamers which make sheets that form the facets of the polyhedral carboxysome. The shell probably limits the diffusion of CO(2) into and out of the carboxysome. There are estimated to be 540 CsoS1B proteins per carboxysome. Functionally, unlike beta-carboxysomes, alpha-carboxysomes (Cb) can form without cargo protein. CsoS2 is essential for Cb formation and is also capable of targeting foreign proteins to the Cb. The Cb shell assembles with the aid of CsoS2; CsoS1A, CsoS1B and CsoS1C form the majority of the shell while CsoS4A and CsoS4B form vertices. CsoS1D forms pseudohexamers that probably control metabolite flux into and out of the shell. This chain is Carboxysome shell protein CsoS1B, found in Halothiobacillus neapolitanus (strain ATCC 23641 / c2) (Thiobacillus neapolitanus).